Reading from the N-terminus, the 371-residue chain is Chaperone protein DnaJ (371 aa).

One can recognise a J domain in the interval Asp5–Gly69. The CR-type zinc-finger motif lies at Gly133–Arg215. Residues Cys146, Cys149, Cys163, Cys166, Cys189, Cys192, Cys203, and Cys206 each contribute to the Zn(2+) site. CXXCXGXG motif repeat units follow at residues Cys146–Gly153, Cys163–Gly170, Cys189–Gly196, and Cys203–Gly210.

This sequence belongs to the DnaJ family. Homodimer. The cofactor is Zn(2+).

Its subcellular location is the cytoplasm. Functionally, participates actively in the response to hyperosmotic and heat shock by preventing the aggregation of stress-denatured proteins and by disaggregating proteins, also in an autonomous, DnaK-independent fashion. Unfolded proteins bind initially to DnaJ; upon interaction with the DnaJ-bound protein, DnaK hydrolyzes its bound ATP, resulting in the formation of a stable complex. GrpE releases ADP from DnaK; ATP binding to DnaK triggers the release of the substrate protein, thus completing the reaction cycle. Several rounds of ATP-dependent interactions between DnaJ, DnaK and GrpE are required for fully efficient folding. Also involved, together with DnaK and GrpE, in the DNA replication of plasmids through activation of initiation proteins. The polypeptide is Chaperone protein DnaJ (Bacillus anthracis (strain A0248)).